Reading from the N-terminus, the 302-residue chain is Protoheme IX farnesyltransferase (302 aa).

The next 9 helical transmembrane spans lie at 28 to 48 (VVAL…PGVP), 50 to 70 (WSVL…AAVV), 95 to 115 (IAPL…MVVL), 122 to 142 (LTAW…TLFL), 150 to 170 (IVIG…AVTG), 176 to 196 (ALLL…ALAI), 221 to 241 (LHIL…FVTG), 243 to 263 (SGGI…QYAV), and 282 to 302 (ITYL…FVPA).

Belongs to the UbiA prenyltransferase family. Protoheme IX farnesyltransferase subfamily.

It localises to the cell inner membrane. The catalysed reaction is heme b + (2E,6E)-farnesyl diphosphate + H2O = Fe(II)-heme o + diphosphate. It participates in porphyrin-containing compound metabolism; heme O biosynthesis; heme O from protoheme: step 1/1. Functionally, converts heme B (protoheme IX) to heme O by substitution of the vinyl group on carbon 2 of heme B porphyrin ring with a hydroxyethyl farnesyl side group. The polypeptide is Protoheme IX farnesyltransferase (Marinobacter nauticus (strain ATCC 700491 / DSM 11845 / VT8) (Marinobacter aquaeolei)).